The primary structure comprises 477 residues: Ribulose bisphosphate carboxylase large chain (477 aa).

The propeptide occupies 1–2 (MS). An N-acetylproline modification is found at proline 3. The residue at position 14 (lysine 14) is an N6,N6,N6-trimethyllysine. Asparagine 123 and threonine 173 together coordinate substrate. Lysine 175 functions as the Proton acceptor in the catalytic mechanism. Lysine 177 serves as a coordination point for substrate. Residues lysine 201, aspartate 203, and glutamate 204 each contribute to the Mg(2+) site. At lysine 201 the chain carries N6-carboxylysine. Catalysis depends on histidine 294, which acts as the Proton acceptor. Arginine 295, histidine 327, and serine 379 together coordinate substrate.

It belongs to the RuBisCO large chain family. Type I subfamily. In terms of assembly, heterohexadecamer of 8 large chains and 8 small chains; disulfide-linked. The disulfide link is formed within the large subunit homodimers. Requires Mg(2+) as cofactor. Post-translationally, the disulfide bond which can form in the large chain dimeric partners within the hexadecamer appears to be associated with oxidative stress and protein turnover.

It is found in the plastid. It catalyses the reaction 2 (2R)-3-phosphoglycerate + 2 H(+) = D-ribulose 1,5-bisphosphate + CO2 + H2O. The enzyme catalyses D-ribulose 1,5-bisphosphate + O2 = 2-phosphoglycolate + (2R)-3-phosphoglycerate + 2 H(+). Functionally, ruBisCO catalyzes two reactions: the carboxylation of D-ribulose 1,5-bisphosphate, the primary event in carbon dioxide fixation, as well as the oxidative fragmentation of the pentose substrate in the photorespiration process. Both reactions occur simultaneously and in competition at the same active site. The protein is Ribulose bisphosphate carboxylase large chain (rbcL) of Lathraea clandestina (Purple toothwort).